The primary structure comprises 339 residues: Ketol-acid reductoisomerase (NADP(+)) (339 aa).

The 182-residue stretch at 1–182 (MRVYYDRDAD…GGGRSGIIET (182 aa)) folds into the KARI N-terminal Rossmann domain. NADP(+) contacts are provided by residues 24–27 (YGSQ), Arg-48, Ser-51, Ser-53, and 83–86 (DELQ). The active site involves His-108. NADP(+) is bound at residue Gly-134. The 146-residue stretch at 183 to 328 (TFREECETDL…GRLRAMMPWI (146 aa)) folds into the KARI C-terminal knotted domain. Mg(2+) is bound by residues Asp-191, Glu-195, Glu-227, and Glu-231. Ser-252 is a substrate binding site.

This sequence belongs to the ketol-acid reductoisomerase family. Mg(2+) is required as a cofactor.

The enzyme catalyses (2R)-2,3-dihydroxy-3-methylbutanoate + NADP(+) = (2S)-2-acetolactate + NADPH + H(+). The catalysed reaction is (2R,3R)-2,3-dihydroxy-3-methylpentanoate + NADP(+) = (S)-2-ethyl-2-hydroxy-3-oxobutanoate + NADPH + H(+). The protein operates within amino-acid biosynthesis; L-isoleucine biosynthesis; L-isoleucine from 2-oxobutanoate: step 2/4. It functions in the pathway amino-acid biosynthesis; L-valine biosynthesis; L-valine from pyruvate: step 2/4. Functionally, involved in the biosynthesis of branched-chain amino acids (BCAA). Catalyzes an alkyl-migration followed by a ketol-acid reduction of (S)-2-acetolactate (S2AL) to yield (R)-2,3-dihydroxy-isovalerate. In the isomerase reaction, S2AL is rearranged via a Mg-dependent methyl migration to produce 3-hydroxy-3-methyl-2-ketobutyrate (HMKB). In the reductase reaction, this 2-ketoacid undergoes a metal-dependent reduction by NADPH to yield (R)-2,3-dihydroxy-isovalerate. This chain is Ketol-acid reductoisomerase (NADP(+)), found in Rhodospirillum rubrum (strain ATCC 11170 / ATH 1.1.1 / DSM 467 / LMG 4362 / NCIMB 8255 / S1).